The chain runs to 118 residues: Large ribosomal subunit protein uL18 (118 aa).

This sequence belongs to the universal ribosomal protein uL18 family. As to quaternary structure, part of the 50S ribosomal subunit; part of the 5S rRNA/L5/L18/L25 subcomplex. Contacts the 5S and 23S rRNAs.

This is one of the proteins that bind and probably mediate the attachment of the 5S RNA into the large ribosomal subunit, where it forms part of the central protuberance. This chain is Large ribosomal subunit protein uL18, found in Campylobacter jejuni subsp. jejuni serotype O:2 (strain ATCC 700819 / NCTC 11168).